We begin with the raw amino-acid sequence, 533 residues long: CTP synthase (533 aa).

The tract at residues 1–269 is amidoligase domain; that stretch reads MKKNLKILVI…HEILSSKLNI (269 aa). Position 16 (Ser-16) interacts with CTP. Ser-16 contacts UTP. ATP-binding positions include 17 to 22 and Asp-73; that span reads GIGKGV. Residues Asp-73 and Glu-143 each contribute to the Mg(2+) site. CTP-binding positions include 150–152, 190–195, and Lys-226; these read DME and KSKPTQ. Residues 190-195 and Lys-226 each bind UTP; that span reads KSKPTQ. In terms of domain architecture, Glutamine amidotransferase type-1 spans 304-533; the sequence is YAELDDSYAS…LFLGLIKACI (230 aa). An L-glutamine-binding site is contributed by Gly-355. Catalysis depends on Cys-382, which acts as the Nucleophile; for glutamine hydrolysis. Residues 383 to 386, Glu-406, and Arg-466 contribute to the L-glutamine site; that span reads LGLQ. Catalysis depends on residues His-511 and Glu-513.

This sequence belongs to the CTP synthase family. Homotetramer.

It carries out the reaction UTP + L-glutamine + ATP + H2O = CTP + L-glutamate + ADP + phosphate + 2 H(+). The enzyme catalyses L-glutamine + H2O = L-glutamate + NH4(+). It catalyses the reaction UTP + NH4(+) + ATP = CTP + ADP + phosphate + 2 H(+). It participates in pyrimidine metabolism; CTP biosynthesis via de novo pathway; CTP from UDP: step 2/2. Its activity is regulated as follows. Allosterically activated by GTP, when glutamine is the substrate; GTP has no effect on the reaction when ammonia is the substrate. The allosteric effector GTP functions by stabilizing the protein conformation that binds the tetrahedral intermediate(s) formed during glutamine hydrolysis. Inhibited by the product CTP, via allosteric rather than competitive inhibition. Its function is as follows. Catalyzes the ATP-dependent amination of UTP to CTP with either L-glutamine or ammonia as the source of nitrogen. Regulates intracellular CTP levels through interactions with the four ribonucleotide triphosphates. This chain is CTP synthase, found in Borreliella burgdorferi (strain ATCC 35210 / DSM 4680 / CIP 102532 / B31) (Borrelia burgdorferi).